Reading from the N-terminus, the 620-residue chain is MALLQIAEPGQSSAPHEHRIAIGIDLGTTHSLVATVLSGQSKVLQDEKGRVLFPSIVHYAEQSIEYGDDAKPFITTDPKNSIISVKRFMGRSKADIKFQHPYVLVGNDNEMPAFETAQGRKTPVEISAAILNQLKIRAEESLKNPINGAVITVPAYFDEAQRQATRDAAQLAGLNVLRLLNEPTAAAIAYGLDQENQLSSDRNYVIYDLGGGTFDVSILRFSQGVFEVLATGGHTALGGDDLDRLIVKWAKKQLHIESLDDHEYAAFLVAARTAKEQLSEQQSVYFKALDHKLELNRDTFESIIQIALDKTISVCKRVLRDAKLSLDEIEKVVLVGGSTRSYAVQNVVRQVFNQEPLCTINPDEVVAIGASITANQLIGNSQDGSLLLDVTPLSLGLETMGGLVERLISRNTAIPVARRQEFTTYQDGQSAMLIHVVQGERDLVEHCRSLGRFVLHGIPPMTAGQARIEVTFQVDADGLLTVSAQETTSGVKAQIDIKPSYGLSATDTERLLLEGFQHAEEDKNLRHLQETKVEAQRELEALEQALKNDAGLLDIQQLQALHTAKDQLQQQLQSNDIDQIERAVAQLKIHSDEFAALRMNQHIDHALKGTKLEDWSDSQK.

It belongs to the heat shock protein 70 family.

Chaperone involved in the maturation of iron-sulfur cluster-containing proteins. Has a low intrinsic ATPase activity which is markedly stimulated by HscB. This is Chaperone protein HscA homolog from Acinetobacter baylyi (strain ATCC 33305 / BD413 / ADP1).